The chain runs to 65 residues: Small ribosomal subunit protein bS21B (65 aa).

Belongs to the bacterial ribosomal protein bS21 family.

The protein is Small ribosomal subunit protein bS21B of Francisella tularensis subsp. holarctica (strain LVS).